An 832-amino-acid chain; its full sequence is Putative pentatricopeptide repeat-containing protein At5g08310, mitochondrial (832 aa).

A mitochondrion-targeting transit peptide spans 1–27; that stretch reads MAFSRIALLCQRFSRQQQQRQLLHRPL. 19 PPR repeats span residues 105-139, 140-174, 176-212, 213-247, 252-281, 282-316, 317-351, 352-383, 385-415, 438-472, 473-507, 508-542, 543-577, 578-612, 613-647, 648-682, 683-717, 718-752, and 753-787; these read DMYA…RCFM, SPGA…GLCV, NAYT…GFHF, DKFT…GWLD, TILV…DIRL, NYKT…GMNA, DIAL…GIPP, DRGI…IDKK, VMLL…LMGN, DSDS…GLIP, GPMM…GVEP, SQFT…GFEP, WIKH…GFLG, HMVA…GHCP, DVIA…GLKP, TVAT…EKNP, DVIT…DCYP, NRIT…EMEP, and DSAV…GRFP.

Belongs to the PPR family. P subfamily.

It localises to the mitochondrion. This Arabidopsis thaliana (Mouse-ear cress) protein is Putative pentatricopeptide repeat-containing protein At5g08310, mitochondrial.